Consider the following 95-residue polypeptide: YcgL domain-containing protein Patl_2802 (95 aa).

The YcgL domain maps to 4 to 88 (LLCAVYKSSK…PEENLLKQHL (85 aa)).

The chain is YcgL domain-containing protein Patl_2802 from Pseudoalteromonas atlantica (strain T6c / ATCC BAA-1087).